Here is a 181-residue protein sequence, read N- to C-terminus: uncharacterized protein (181 aa).

It belongs to the M.jannaschii MJ0150/MJ0739/MJ0745/MJ1460/MJ1642 family.

This is an uncharacterized protein from Methanocaldococcus jannaschii (strain ATCC 43067 / DSM 2661 / JAL-1 / JCM 10045 / NBRC 100440) (Methanococcus jannaschii).